An 896-amino-acid chain; its full sequence is Protein translocase subunit SecA (896 aa).

Residues Q87, 105 to 109, and D512 each bind ATP; that span reads GEGKT. A disordered region spans residues 858-886; it reads RAGGEAEAAKPVVRDEKKVGRNDPCPCGS. Basic and acidic residues predominate over residues 869–878; that stretch reads VVRDEKKVGR. 4 residues coordinate Zn(2+): C882, C884, C893, and C894.

Belongs to the SecA family. In terms of assembly, monomer and homodimer. Part of the essential Sec protein translocation apparatus which comprises SecA, SecYEG and auxiliary proteins SecDF-YajC and YidC. Zn(2+) is required as a cofactor.

The protein resides in the cell inner membrane. It is found in the cytoplasm. The enzyme catalyses ATP + H2O + cellular proteinSide 1 = ADP + phosphate + cellular proteinSide 2.. Functionally, part of the Sec protein translocase complex. Interacts with the SecYEG preprotein conducting channel. Has a central role in coupling the hydrolysis of ATP to the transfer of proteins into and across the cell membrane, serving as an ATP-driven molecular motor driving the stepwise translocation of polypeptide chains across the membrane. This chain is Protein translocase subunit SecA, found in Syntrophotalea carbinolica (strain DSM 2380 / NBRC 103641 / GraBd1) (Pelobacter carbinolicus).